The sequence spans 259 residues: MIKIIVAGFKGRMGSTATQMVLETADFELVGVYDPHEAQETVSFNDETAIPVFQRLEEVLAVKPDVWIDFTVPEAAYPNTRFALEHGMAPVVGTTGFTEEQINELTNLSREKAIGGLIAPNFAIGAVLMMQFAQKAAQYFPDVEIIELHHDNKLDAPSGTAIKTAEMIQEVRPAKKQGNPQEVESIPGARGADFEGLRIHSVRLPGLVAHQQVQFGSVGEGLTIRHDSYDRRSFMTGVALACRQVVQRTELLYGLEQML.

Residues 8–13 (GFKGRM), 93–95 (GTT), and 119–122 (APNF) contribute to the NAD(+) site. Catalysis depends on His149, which acts as the Proton donor/acceptor. His150 contacts (S)-2,3,4,5-tetrahydrodipicolinate. The active-site Proton donor is the Lys153. 159 to 160 (GT) contacts (S)-2,3,4,5-tetrahydrodipicolinate.

This sequence belongs to the DapB family.

It is found in the cytoplasm. The catalysed reaction is (S)-2,3,4,5-tetrahydrodipicolinate + NAD(+) + H2O = (2S,4S)-4-hydroxy-2,3,4,5-tetrahydrodipicolinate + NADH + H(+). It catalyses the reaction (S)-2,3,4,5-tetrahydrodipicolinate + NADP(+) + H2O = (2S,4S)-4-hydroxy-2,3,4,5-tetrahydrodipicolinate + NADPH + H(+). Its pathway is amino-acid biosynthesis; L-lysine biosynthesis via DAP pathway; (S)-tetrahydrodipicolinate from L-aspartate: step 4/4. Its function is as follows. Catalyzes the conversion of 4-hydroxy-tetrahydrodipicolinate (HTPA) to tetrahydrodipicolinate. The sequence is that of 4-hydroxy-tetrahydrodipicolinate reductase from Enterococcus faecalis (strain ATCC 700802 / V583).